The chain runs to 321 residues: Methionyl-tRNA formyltransferase (321 aa).

Ser112–Pro115 provides a ligand contact to (6S)-5,6,7,8-tetrahydrofolate.

The protein belongs to the Fmt family.

The enzyme catalyses L-methionyl-tRNA(fMet) + (6R)-10-formyltetrahydrofolate = N-formyl-L-methionyl-tRNA(fMet) + (6S)-5,6,7,8-tetrahydrofolate + H(+). Functionally, attaches a formyl group to the free amino group of methionyl-tRNA(fMet). The formyl group appears to play a dual role in the initiator identity of N-formylmethionyl-tRNA by promoting its recognition by IF2 and preventing the misappropriation of this tRNA by the elongation apparatus. The sequence is that of Methionyl-tRNA formyltransferase from Shewanella piezotolerans (strain WP3 / JCM 13877).